A 72-amino-acid polypeptide reads, in one-letter code: Cell division protein ZapB (72 aa).

Residues 2 to 72 (SLEILDQLEG…RSLLGQIDNV (71 aa)) are a coiled coil. The tract at residues 34 to 57 (NQQAQQANDELRSENEQLKGEHNN) is disordered. The span at 42–57 (DELRSENEQLKGEHNN) shows a compositional bias: basic and acidic residues.

Belongs to the ZapB family. In terms of assembly, homodimer. The ends of the coiled-coil dimer bind to each other, forming polymers. Interacts with FtsZ.

Its subcellular location is the cytoplasm. Its function is as follows. Non-essential, abundant cell division factor that is required for proper Z-ring formation. It is recruited early to the divisome by direct interaction with FtsZ, stimulating Z-ring assembly and thereby promoting cell division earlier in the cell cycle. Its recruitment to the Z-ring requires functional FtsA or ZipA. The sequence is that of Cell division protein ZapB from Mannheimia succiniciproducens (strain KCTC 0769BP / MBEL55E).